A 640-amino-acid polypeptide reads, in one-letter code: Antigenic protein NP1 (640 aa).

Residues 1–288 (VQVSIGKCNH…SYVNIAHAFG (288 aa)) form the Peptidase M60 domain. The PA14 domain maps to 463 to 615 (LDPHQVEYEV…TDQSSVNVSK (153 aa)).

The polypeptide is Antigenic protein NP1 (Entamoeba histolytica).